Here is a 216-residue protein sequence, read N- to C-terminus: Flavin prenyltransferase UbiX (216 aa).

FMN-binding positions include 9-11, Ser-35, and Arg-144; that span reads GAS. The dimethylallyl phosphate site is built by Tyr-174 and Arg-190.

The protein belongs to the UbiX/PAD1 family.

The catalysed reaction is dimethylallyl phosphate + FMNH2 = prenylated FMNH2 + phosphate. Flavin prenyltransferase that catalyzes the synthesis of the prenylated FMN cofactor (prenyl-FMN) for 4-hydroxy-3-polyprenylbenzoic acid decarboxylase UbiD. The prenyltransferase is metal-independent and links a dimethylallyl moiety from dimethylallyl monophosphate (DMAP) to the flavin N5 and C6 atoms of FMN. This is Flavin prenyltransferase UbiX from Streptomyces coelicolor (strain ATCC BAA-471 / A3(2) / M145).